Reading from the N-terminus, the 85-residue chain is Small ribosomal subunit protein bS16 (85 aa).

This sequence belongs to the bacterial ribosomal protein bS16 family.

This Acinetobacter baylyi (strain ATCC 33305 / BD413 / ADP1) protein is Small ribosomal subunit protein bS16.